The sequence spans 367 residues: 4-hydroxy-3-methylbut-2-en-1-yl diphosphate synthase (flavodoxin) (367 aa).

Cysteine 268, cysteine 271, cysteine 303, and glutamate 310 together coordinate [4Fe-4S] cluster.

The protein belongs to the IspG family. The cofactor is [4Fe-4S] cluster.

It catalyses the reaction (2E)-4-hydroxy-3-methylbut-2-enyl diphosphate + oxidized [flavodoxin] + H2O + 2 H(+) = 2-C-methyl-D-erythritol 2,4-cyclic diphosphate + reduced [flavodoxin]. It participates in isoprenoid biosynthesis; isopentenyl diphosphate biosynthesis via DXP pathway; isopentenyl diphosphate from 1-deoxy-D-xylulose 5-phosphate: step 5/6. Converts 2C-methyl-D-erythritol 2,4-cyclodiphosphate (ME-2,4cPP) into 1-hydroxy-2-methyl-2-(E)-butenyl 4-diphosphate. The chain is 4-hydroxy-3-methylbut-2-en-1-yl diphosphate synthase (flavodoxin) from Shouchella clausii (strain KSM-K16) (Alkalihalobacillus clausii).